We begin with the raw amino-acid sequence, 253 residues long: MSFIAIIPSRYASTRLPGKPLADIAGKPMVVHVMAQAQASGAERVIVATDHPDVQHAVLQAGGEVCMTRADHNSGTERLAEVVELCGFADDDIIVNVQGDEPLIPPQIIRQVAENLARCDAGMATLAVPIHDAAEAFNPNAVKVVRDSQGYALYFSRAAIPWDRERFAVSQSQIGQTFLRHIGIYAYRAGFIRRYVNWAPSQLEQIEMLEQLRVLWYGEKIHVDVALQAPGTGVDTPEDLDCVRAILASQGQN.

Belongs to the KdsB family.

The protein localises to the cytoplasm. It catalyses the reaction 3-deoxy-alpha-D-manno-oct-2-ulosonate + CTP = CMP-3-deoxy-beta-D-manno-octulosonate + diphosphate. It functions in the pathway nucleotide-sugar biosynthesis; CMP-3-deoxy-D-manno-octulosonate biosynthesis; CMP-3-deoxy-D-manno-octulosonate from 3-deoxy-D-manno-octulosonate and CTP: step 1/1. Its pathway is bacterial outer membrane biogenesis; lipopolysaccharide biosynthesis. Functionally, activates KDO (a required 8-carbon sugar) for incorporation into bacterial lipopolysaccharide in Gram-negative bacteria. The protein is 3-deoxy-manno-octulosonate cytidylyltransferase of Edwardsiella ictaluri (strain 93-146).